An 867-amino-acid chain; its full sequence is Programmed cell death 6-interacting protein (867 aa).

The 389-residue stretch at 3–391 folds into the BRO1 domain; sequence TFISVPLKKT…AQMRDATIFA (389 aa). Disordered stretches follow at residues 714 to 809 and 835 to 867; these read REPS…PYPS and IPPY…FPPQ. Positions 729–744 are enriched in low complexity; sequence SAPSSISTNIATSSIP. The span at 756-766 shows a compositional bias: pro residues; sequence QPPPRPPPPAM. A compositionally biased stretch (low complexity) spans 767–791; it reads PSASPVPASAAQASNPAPTAAADSS. Polar residues predominate over residues 792–803; that stretch reads QPPSNTIPSQAQ. Over residues 852 to 861 the composition is skewed to low complexity; that stretch reads QQPSFSYPQQ.

In terms of processing, phosphorylated on tyrosine residues.

The protein resides in the cytoplasm. The protein localises to the cytosol. Its subcellular location is the melanosome. It localises to the cytoskeleton. It is found in the microtubule organizing center. The protein resides in the centrosome. The protein localises to the secreted. Its subcellular location is the extracellular exosome. It localises to the cell junction. It is found in the tight junction. The protein resides in the midbody. The protein localises to the midbody ring. Functionally, multifunctional protein that may be involved in endocytosis, multivesicular body biogenesis, membrane repair, cytokinesis, apoptosis and maintenance of tight junction integrity. Class E VPS protein involved in concentration and sorting of cargo proteins of the multivesicular body (MVB) for incorporation into intralumenal vesicles that are generated by invagination and scission from the limiting membrane of the endosome. Binds to the phospholipid lysobisphosphatidic acid (LBPA) which is abundant in MVBs internal membranes. May play a role in the regulation of both apoptosis and cell proliferation. Regulates exosome biogenesis in concert with SDC1/4 and SDCBP. Ensures the proper assembly and positioning of actomyosin-tight junction complex at the apical sides of adjacent epithelial cells that defines a spatial membrane domain essential for the maintenance of epithelial cell polarity and barrier. The protein is Programmed cell death 6-interacting protein (pdcd6ip) of Xenopus laevis (African clawed frog).